Reading from the N-terminus, the 315-residue chain is Acetyl-coenzyme A carboxylase carboxyl transferase subunit alpha (315 aa).

One can recognise a CoA carboxyltransferase C-terminal domain in the interval 40 to 293 (LQDKSKTLTE…RAELSSQLAM (254 aa)).

The protein belongs to the AccA family. As to quaternary structure, acetyl-CoA carboxylase is a heterohexamer composed of biotin carboxyl carrier protein (AccB), biotin carboxylase (AccC) and two subunits each of ACCase subunit alpha (AccA) and ACCase subunit beta (AccD).

The protein resides in the cytoplasm. The enzyme catalyses N(6)-carboxybiotinyl-L-lysyl-[protein] + acetyl-CoA = N(6)-biotinyl-L-lysyl-[protein] + malonyl-CoA. Its pathway is lipid metabolism; malonyl-CoA biosynthesis; malonyl-CoA from acetyl-CoA: step 1/1. Functionally, component of the acetyl coenzyme A carboxylase (ACC) complex. First, biotin carboxylase catalyzes the carboxylation of biotin on its carrier protein (BCCP) and then the CO(2) group is transferred by the carboxyltransferase to acetyl-CoA to form malonyl-CoA. This Pseudomonas fluorescens (strain Pf0-1) protein is Acetyl-coenzyme A carboxylase carboxyl transferase subunit alpha.